The sequence spans 128 residues: Natriuretic peptides A (128 aa).

Positions 36 to 84 (QVASEQNEEAGAVLSALPEVPSWPGEAGPAQREGGALGRGPWDSSDRSA) are disordered. A propeptide spanning residues 68-78 (EGGALGRGPWD) is cleaved from the precursor. The residue at position 104 (Ser-104) is a Phosphoserine. The cysteines at positions 105 and 121 are disulfide-linked. Residues 122–126 (NSFRY) form an important for degradation of atrial natriuretic peptide by IDE region.

It belongs to the natriuretic peptide family. Homodimer; disulfide-linked antiparallel dimer. Post-translationally, the precursor molecule is proteolytically cleaved by CORIN at Arg-98 to produce atrial natriuretic peptide. Undergoes further proteolytic cleavage by unknown proteases to give rise to long-acting natriuretic peptide, vessel dilator and kaliuretic peptide. Additional processing gives rise to the auriculin and atriopeptin peptides. In the kidneys, alternative processing by an unknown protease results in the peptide urodilatin. Cleavage by MME initiates degradation of the factor and thereby regulates its activity. Degraded by IDE (in vitro). During IDE degradation, the resulting products can temporarily stimulate NPR2 to produce cGMP, before the fragments are completely degraded and inactivated by IDE (in vitro). In terms of processing, degraded by IDE. Post-translationally, phosphorylation on Ser-104 decreases vasorelaxant activity.

Its subcellular location is the secreted. It localises to the perikaryon. The protein localises to the cell projection. Hormone that plays a key role in mediating cardio-renal homeostasis, and is involved in vascular remodeling and regulating energy metabolism. Acts by specifically binding and stimulating NPR1 to produce cGMP, which in turn activates effector proteins, such as PRKG1, that drive various biological responses. Regulates vasodilation, natriuresis, diuresis and aldosterone synthesis and is therefore essential for regulating blood pressure, controlling the extracellular fluid volume and maintaining the fluid-electrolyte balance. Also involved in inhibiting cardiac remodeling and cardiac hypertrophy by inducing cardiomyocyte apoptosis and attenuating the growth of cardiomyocytes and fibroblasts. Plays a role in female pregnancy by promoting trophoblast invasion and spiral artery remodeling in uterus, and thus prevents pregnancy-induced hypertension. In adipose tissue, acts in various cGMP- and PKG-dependent pathways to regulate lipid metabolism and energy homeostasis. This includes up-regulating lipid metabolism and mitochondrial oxygen utilization by activating the AMP-activated protein kinase (AMPK), and increasing energy expenditure by acting via MAPK11 to promote the UCP1-dependent thermogenesis of brown adipose tissue. Binds the clearance receptor NPR3 which removes the hormone from circulation. Its function is as follows. May have a role in cardio-renal homeostasis through regulation of natriuresis, diuresis, vasodilation, and inhibiting aldosterone synthesis. In vitro, promotes the production of cGMP and induces vasodilation. May promote natriuresis, at least in part, by enhancing prostaglandin E2 synthesis resulting in the inhibition of renal Na+-K+-ATPase. However reports on the involvement of this peptide in mammal blood volume and blood pressure homeostasis are conflicting; according to a report, in vivo it is not sufficient to activate cGMP and does not inhibit collecting duct transport nor effect diuresis and natriuresis. Appears to bind to specific receptors that are distinct from the receptors bound by atrial natriuretic peptide and vessel dilator. Possibly enhances protein excretion in urine by decreasing proximal tubular protein reabsorption. Functionally, may have a role in cardio-renal homeostasis through regulation of natriuresis, diuresis, and vasodilation. In vitro, promotes the production of cGMP and induces vasodilation. May promote natriuresis, at least in part, by enhancing prostaglandin E2 synthesis resulting in the inhibition of renal Na+-K+-ATPase. However reports on the involvement of this peptide in mammal blood volume and blood pressure homeostasis are conflicting; according to a report it is not sufficient to activate cGMP and does not inhibit collecting duct transport nor effect diuresis and natriuresis. Appears to bind to specific receptors that are distinct from the receptors bound by the atrial natriuretic and long-acting natriuretic peptides. Possibly functions in protein excretion in urine by maintaining the integrity of the proximal tubules and enhancing protein excretion by decreasing proximal tubular protein reabsorption. In terms of biological role, may have a role in cardio-renal homeostasis through regulation of diuresis and inhibiting aldosterone synthesis. In vitro, promotes the production of cGMP and induces vasodilation. May promote natriuresis, at least in part, by enhancing prostaglandin E2 synthesis resulting in the inhibition of renal Na+-K+-ATPase. May have a role in potassium excretion but not sodium excretion (natriuresis). Possibly enhances protein excretion in urine by decreasing proximal tubular protein reabsorption. Hormone produced in the kidneys that appears to be important for maintaining cardio-renal homeostasis. Mediates vasodilation, natriuresis and diuresis primarily in the renal system, in order to maintain the extracellular fluid volume and control the fluid-electrolyte balance. Specifically binds and stimulates cGMP production by renal transmembrane receptors, likely NPR1. Urodilatin not ANP, may be the natriuretic peptide responsible for the regulation of sodium and water homeostasis in the kidney. Its function is as follows. May have a role in cardio-renal homeostasis through regulation of natriuresis and vasodilation. In vivo promotes natriuresis and in vitro, vasodilates renal artery strips. Functionally, may have a role in cardio-renal homeostasis through regulation of regulation of natriuresis and vasodilation. In vivo promotes natriuresis. In vitro, vasodilates intestinal smooth muscle but not smooth muscle strips. In terms of biological role, may have a role in cardio-renal homeostasis through regulation of natriuresis and vasodilation. In vivo promotes natriuresis. In vitro, selectively vasodilates intestinal and vascular smooth muscle strips. May have a role in cardio-renal homeostasis through regulation of natriuresis and vasodilation. In vivo promotes natriuresis. In vitro, selectively vasodilates intestinal smooth muscle but not vascular smooth muscle strips. This is Natriuretic peptides A (NPPA) from Cavia porcellus (Guinea pig).